The primary structure comprises 161 residues: Regulator of ribonuclease activity A (161 aa).

The protein belongs to the RraA family. Homotrimer. Binds to both RNA-binding sites in the C-terminal region of Rne and to RhlB.

It is found in the cytoplasm. Functionally, globally modulates RNA abundance by binding to RNase E (Rne) and regulating its endonucleolytic activity. Can modulate Rne action in a substrate-dependent manner by altering the composition of the degradosome. Modulates RNA-binding and helicase activities of the degradosome. The protein is Regulator of ribonuclease activity A of Shewanella denitrificans (strain OS217 / ATCC BAA-1090 / DSM 15013).